We begin with the raw amino-acid sequence, 251 residues long: MVEDSQETTHFGFQTVAKEQKADMVAHVFHSVASKYDVMNDLMSFGIHRLWKRFTIDCSGVRRGQTVLDLAGGTGDLTAKFSRMVGETGKVILADINDSMLKMGREKLRNIGVIGNVEYVQANAEALPFPDNTFDCITISFGLRNVTEKEKALRSMFRVLKPGGRLLVLEFSKPIIEPLSKAYDAYSFHILPRIGSMVANDADSYRYLAESIRMHPDQDTLKAMMQDAGFESVDYYNLTAGVVALHRGYKF.

S-adenosyl-L-methionine contacts are provided by residues Thr74, Asp95, 123-124 (NA), and Ser140.

The protein belongs to the class I-like SAM-binding methyltransferase superfamily. MenG/UbiE family.

It catalyses the reaction a 2-demethylmenaquinol + S-adenosyl-L-methionine = a menaquinol + S-adenosyl-L-homocysteine + H(+). The catalysed reaction is a 2-methoxy-6-(all-trans-polyprenyl)benzene-1,4-diol + S-adenosyl-L-methionine = a 5-methoxy-2-methyl-3-(all-trans-polyprenyl)benzene-1,4-diol + S-adenosyl-L-homocysteine + H(+). The protein operates within quinol/quinone metabolism; menaquinone biosynthesis; menaquinol from 1,4-dihydroxy-2-naphthoate: step 2/2. Its pathway is cofactor biosynthesis; ubiquinone biosynthesis. Methyltransferase required for the conversion of demethylmenaquinol (DMKH2) to menaquinol (MKH2) and the conversion of 2-polyprenyl-6-methoxy-1,4-benzoquinol (DDMQH2) to 2-polyprenyl-3-methyl-6-methoxy-1,4-benzoquinol (DMQH2). The polypeptide is Ubiquinone/menaquinone biosynthesis C-methyltransferase UbiE (Salmonella paratyphi A (strain AKU_12601)).